The primary structure comprises 449 residues: Trigger factor (449 aa).

Positions 173–258 constitute a PPIase FKBP-type domain; the sequence is GDRVTLDFVG…LKKVEWAHLP (86 aa).

This sequence belongs to the FKBP-type PPIase family. Tig subfamily.

Its subcellular location is the cytoplasm. The catalysed reaction is [protein]-peptidylproline (omega=180) = [protein]-peptidylproline (omega=0). Functionally, involved in protein export. Acts as a chaperone by maintaining the newly synthesized protein in an open conformation. Functions as a peptidyl-prolyl cis-trans isomerase. This chain is Trigger factor, found in Cupriavidus metallidurans (strain ATCC 43123 / DSM 2839 / NBRC 102507 / CH34) (Ralstonia metallidurans).